Reading from the N-terminus, the 355-residue chain is GTPase Obg (355 aa).

In terms of domain architecture, Obg spans 1–159 (MKFLDEAKVY…KTIWLRLKLI (159 aa)). Positions 160-327 (ADAGLVGLPN…ALRALRDIIV (168 aa)) constitute an OBG-type G domain. GTP is bound by residues 166-173 (GLPNAGKS), 191-195 (FTTLH), 212-215 (DIPG), 279-282 (SQID), and 308-310 (SAA). Mg(2+) is bound by residues serine 173 and threonine 193. Positions 333 to 355 (GDTALPDRSMPHESEVEEEDDRL) are disordered.

The protein belongs to the TRAFAC class OBG-HflX-like GTPase superfamily. OBG GTPase family. Monomer. Requires Mg(2+) as cofactor.

The protein localises to the cytoplasm. Functionally, an essential GTPase which binds GTP, GDP and possibly (p)ppGpp with moderate affinity, with high nucleotide exchange rates and a fairly low GTP hydrolysis rate. Plays a role in control of the cell cycle, stress response, ribosome biogenesis and in those bacteria that undergo differentiation, in morphogenesis control. The chain is GTPase Obg from Agrobacterium fabrum (strain C58 / ATCC 33970) (Agrobacterium tumefaciens (strain C58)).